The sequence spans 284 residues: Putative transcription factor kapC (284 aa).

The segment covering 1–10 has biased composition (pro residues); sequence MQPTLAPAPH. Positions 1–121 are disordered; sequence MQPTLAPAPH…NRAAQRAFRQ (121 aa). Low complexity predominate over residues 26–40; sequence HDQLLAAHQHLSHPQ. A compositionally biased stretch (pro residues) spans 41–54; the sequence is QPRPQPPAAQPPHM. Over residues 57-67 the composition is skewed to polar residues; sequence NTTSPRDQNNI. The region spanning 102-165 is the bZIP domain; that stretch reads PLSTSKRAAQ…EYIINLQSRL (64 aa). Positions 103–126 are basic motif; sequence LSTSKRAAQNRAAQRAFRQRKESY. Over residues 108–118 the composition is skewed to low complexity; that stretch reads RAAQNRAAQRA. The interval 130-161 is leucine-zipper; sequence LEEQVKEFDTMSEAFKALQAENYQLREYIINL. A disordered region spans residues 174–284; it reads ELPGNIDLSQ…QAPHGLPMVS (111 aa). Residues 193–222 show a composition bias toward low complexity; that stretch reads PGAGPATTSSSAPAPPSGAQQAQPPQGAAS.

This sequence belongs to the bZIP family.

The protein localises to the nucleus. In terms of biological role, putative transcription factor. This is Putative transcription factor kapC (kapC) from Aspergillus oryzae (strain ATCC 42149 / RIB 40) (Yellow koji mold).